The sequence spans 622 residues: Phosphoenolpyruvate carboxykinase [GTP] (622 aa).

Substrate-binding positions include arginine 86 and 220–222 (YGG). Residues lysine 229 and histidine 248 each contribute to the Mn(2+) site. Serine 270 is a binding site for substrate. Position 271–276 (271–276 (MCGKTS)) interacts with GTP. Cysteine 272 is a catalytic residue. Aspartate 289 serves as a coordination point for Mn(2+). Over residues 360 to 374 (ENHSGKWWRGKKDSE) the composition is skewed to basic and acidic residues. Residues 360–381 (ENHSGKWWRGKKDSEGNEISPS) form a disordered region. 384 to 386 (NAR) serves as a coordination point for substrate. The GTP site is built by arginine 386 and arginine 418.

The protein belongs to the phosphoenolpyruvate carboxykinase [GTP] family. Mn(2+) is required as a cofactor.

The protein localises to the cytoplasm. The enzyme catalyses oxaloacetate + GTP = phosphoenolpyruvate + GDP + CO2. It participates in carbohydrate biosynthesis; gluconeogenesis. Catalyzes the conversion of oxaloacetate (OAA) to phosphoenolpyruvate (PEP), the rate-limiting step in the metabolic pathway that produces glucose from lactate and other precursors derived from the citric acid cycle. The sequence is that of Phosphoenolpyruvate carboxykinase [GTP] from Thermococcus sibiricus (strain DSM 12597 / MM 739).